The following is a 144-amino-acid chain: MKVLIQRALNACVVVDGETIGAIDHGQLVLVGIEKGDTEVDTQRLADKLLKYRMFGDEDGKMNLNVQQVAGGILLVSQFTLAAETKKGLRPGFSTAAIPEEGERLFNDFVNKVRAQYSKVETGRFGADMKVSFTNDGPVTFMLD.

Positions 137 to 138 (GP) match the Gly-cisPro motif, important for rejection of L-amino acids motif.

The protein belongs to the DTD family. In terms of assembly, homodimer.

The protein resides in the cytoplasm. It catalyses the reaction glycyl-tRNA(Ala) + H2O = tRNA(Ala) + glycine + H(+). It carries out the reaction a D-aminoacyl-tRNA + H2O = a tRNA + a D-alpha-amino acid + H(+). In terms of biological role, an aminoacyl-tRNA editing enzyme that deacylates mischarged D-aminoacyl-tRNAs. Also deacylates mischarged glycyl-tRNA(Ala), protecting cells against glycine mischarging by AlaRS. Acts via tRNA-based rather than protein-based catalysis; rejects L-amino acids rather than detecting D-amino acids in the active site. By recycling D-aminoacyl-tRNA to D-amino acids and free tRNA molecules, this enzyme counteracts the toxicity associated with the formation of D-aminoacyl-tRNA entities in vivo and helps enforce protein L-homochirality. This chain is D-aminoacyl-tRNA deacylase, found in Marinomonas sp. (strain MWYL1).